The chain runs to 63 residues: MENEVVFFCRKCNHHLFAKNPMINTLKVISEMDCPNCGEEGYHNWILSHIGDSEKEKENYNWK.

The chain is SPbeta prophage-derived uncharacterized protein YotC (yotC) from Bacillus subtilis (strain 168).